Reading from the N-terminus, the 534-residue chain is Cytochrome c oxidase subunit 1 (534 aa).

Residues 16 to 36 (VLYFMLAIFSGMAGTAMSLII) traverse the membrane as a helical segment. Ca(2+)-binding residues include E39, A42, and G44. The next 6 membrane-spanning stretches (helical) occupy residues 57 to 77 (VLVV…ALIG), 101 to 121 (IAFW…LVES), 147 to 167 (AIFA…NFIV), 182 to 202 (LPLF…SLPV), 235 to 255 (LFYF…FGII), and 267 to 287 (VFGE…GFLV). Fe(II)-heme a is bound at residue H62. H241 contributes to the Cu cation binding site. The 1'-histidyl-3'-tyrosine (His-Tyr) cross-link spans 241 to 245 (HPEVY). Y245 is an O2 binding site. The Cu cation site is built by H290 and H291. Helical transmembrane passes span 310 to 330 (MIIA…IYGG) and 338 to 358 (MLYA…GVAL). Residues H368 and D369 each coordinate Mg(2+). Transmembrane regions (helical) follow at residues 372–392 (YVVG…LFAG) and 414–434 (FWLI…LGIN). H376 provides a ligand contact to heme a3. A Fe(II)-heme a-binding site is contributed by H378. A Ca(2+)-binding site is contributed by P441. A helical membrane pass occupies residues 452 to 472 (YVASIGSFIATLSLFLFIYIL).

Belongs to the heme-copper respiratory oxidase family. Component of the cytochrome c oxidase (complex IV, CIV), a multisubunit enzyme composed of a catalytic core of 3 subunits and several supernumerary subunits. The complex exists as a monomer or a dimer and forms supercomplexes (SCs) in the inner mitochondrial membrane with ubiquinol-cytochrome c oxidoreductase (cytochrome b-c1 complex, complex III, CIII). Requires heme as cofactor. Cu cation is required as a cofactor.

The protein resides in the mitochondrion inner membrane. The enzyme catalyses 4 Fe(II)-[cytochrome c] + O2 + 8 H(+)(in) = 4 Fe(III)-[cytochrome c] + 2 H2O + 4 H(+)(out). Its pathway is energy metabolism; oxidative phosphorylation. Functionally, component of the cytochrome c oxidase, the last enzyme in the mitochondrial electron transport chain which drives oxidative phosphorylation. The respiratory chain contains 3 multisubunit complexes succinate dehydrogenase (complex II, CII), ubiquinol-cytochrome c oxidoreductase (cytochrome b-c1 complex, complex III, CIII) and cytochrome c oxidase (complex IV, CIV), that cooperate to transfer electrons derived from NADH and succinate to molecular oxygen, creating an electrochemical gradient over the inner membrane that drives transmembrane transport and the ATP synthase. Cytochrome c oxidase is the component of the respiratory chain that catalyzes the reduction of oxygen to water. Electrons originating from reduced cytochrome c in the intermembrane space (IMS) are transferred via the dinuclear copper A center (CU(A)) of subunit 2 and heme A of subunit 1 to the active site in subunit 1, a binuclear center (BNC) formed by heme A3 and copper B (CU(B)). The BNC reduces molecular oxygen to 2 water molecules using 4 electrons from cytochrome c in the IMS and 4 protons from the mitochondrial matrix. This chain is Cytochrome c oxidase subunit 1 (COXI), found in Saccharomyces paradoxus (Yeast).